Reading from the N-terminus, the 628-residue chain is Probable potassium transport system protein Kup (628 aa).

Transmembrane regions (helical) follow at residues Phe-15–Tyr-35, Phe-49–Val-69, Trp-106–Thr-126, Ile-141–Phe-161, Phe-174–Ile-194, Ile-210–Ala-230, Leu-254–Val-274, Leu-295–Phe-315, Ile-343–Phe-363, Leu-369–Ile-389, Trp-398–Ala-418, and Ile-425–Ser-445.

The protein belongs to the HAK/KUP transporter (TC 2.A.72) family.

The protein localises to the cell inner membrane. It carries out the reaction K(+)(in) + H(+)(in) = K(+)(out) + H(+)(out). Functionally, transport of potassium into the cell. Likely operates as a K(+):H(+) symporter. The polypeptide is Probable potassium transport system protein Kup (Xanthobacter autotrophicus (strain ATCC BAA-1158 / Py2)).